A 587-amino-acid polypeptide reads, in one-letter code: Protein POF1B (587 aa).

A coiled-coil region spans residues 331 to 529 (STFSNIREEL…EELSKLRQEI (199 aa)).

Interacts with nonmuscle actin. In terms of tissue distribution, expression absent in adult ovary.

It is found in the cell junction. Its subcellular location is the tight junction. Its function is as follows. Plays a key role in the organization of epithelial monolayers by regulating the actin cytoskeleton. May be involved in ovary development. The chain is Protein POF1B (Pof1b) from Mus musculus (Mouse).